Reading from the N-terminus, the 233-residue chain is Orotidine 5'-phosphate decarboxylase (233 aa).

Residues Asp-9, Lys-31, 58 to 67 (DLKLHDIPNT), Thr-120, Arg-182, Gln-191, Gly-211, and Arg-212 each bind substrate. Residue Lys-60 is the Proton donor of the active site.

The protein belongs to the OMP decarboxylase family. Type 1 subfamily. In terms of assembly, homodimer.

It catalyses the reaction orotidine 5'-phosphate + H(+) = UMP + CO2. The protein operates within pyrimidine metabolism; UMP biosynthesis via de novo pathway; UMP from orotate: step 2/2. Functionally, catalyzes the decarboxylation of orotidine 5'-monophosphate (OMP) to uridine 5'-monophosphate (UMP). This chain is Orotidine 5'-phosphate decarboxylase, found in Listeria welshimeri serovar 6b (strain ATCC 35897 / DSM 20650 / CCUG 15529 / CIP 8149 / NCTC 11857 / SLCC 5334 / V8).